Here is a 264-residue protein sequence, read N- to C-terminus: uncharacterized protein (264 aa).

Residues 7–27 (LTLGICLVLLIILIVGYVIMT) form a helical membrane-spanning segment.

Belongs to the staphylococcal tandem lipoprotein family.

It is found in the cell membrane. This is an uncharacterized protein from Staphylococcus aureus (strain MW2).